The following is a 308-amino-acid chain: Transaldolase (308 aa).

The Schiff-base intermediate with substrate role is filled by K125.

This sequence belongs to the transaldolase family. Type 1 subfamily. As to quaternary structure, homodimer.

The protein localises to the cytoplasm. The enzyme catalyses D-sedoheptulose 7-phosphate + D-glyceraldehyde 3-phosphate = D-erythrose 4-phosphate + beta-D-fructose 6-phosphate. Its pathway is carbohydrate degradation; pentose phosphate pathway; D-glyceraldehyde 3-phosphate and beta-D-fructose 6-phosphate from D-ribose 5-phosphate and D-xylulose 5-phosphate (non-oxidative stage): step 2/3. Its function is as follows. Transaldolase is important for the balance of metabolites in the pentose-phosphate pathway. This Pseudomonas fluorescens (strain Pf0-1) protein is Transaldolase.